Consider the following 208-residue polypeptide: Small ribosomal subunit protein uS4 (208 aa).

In terms of domain architecture, S4 RNA-binding spans 98 to 166 (SRLDNVVYRM…VKEAIEASRN (69 aa)).

It belongs to the universal ribosomal protein uS4 family. In terms of assembly, part of the 30S ribosomal subunit. Contacts protein S5. The interaction surface between S4 and S5 is involved in control of translational fidelity.

Its function is as follows. One of the primary rRNA binding proteins, it binds directly to 16S rRNA where it nucleates assembly of the body of the 30S subunit. With S5 and S12 plays an important role in translational accuracy. This Kosmotoga olearia (strain ATCC BAA-1733 / DSM 21960 / TBF 19.5.1) protein is Small ribosomal subunit protein uS4.